Here is a 201-residue protein sequence, read N- to C-terminus: Putative manganese efflux pump MntP 2 (201 aa).

6 helical membrane-spanning segments follow: residues 3–23 (LISVILISIGLSMDAFAVSIT), 39–59 (IGLFFGGFQALMPLIGWSIGI), 65–85 (IAALDHWIALILLSIIGGKMI), 116–136 (LILLAIATSIDALAVGVSFAF), 141–161 (IINTIIIIGSITFVICFIGVM), and 176–196 (ILGGVVLILIGVKIFIQHTNI).

This sequence belongs to the MntP (TC 9.B.29) family.

It localises to the cell membrane. Probably functions as a manganese efflux pump. The chain is Putative manganese efflux pump MntP 2 from Clostridium botulinum (strain Hall / ATCC 3502 / NCTC 13319 / Type A).